The primary structure comprises 615 residues: Putative binding protein BRA0576/BS1330_II0571 (615 aa).

An N-terminal signal peptide occupies residues 1–29 (MLNRFIAFFRSVFLIGLVATAFGALPARA).

It belongs to the bacterial solute-binding protein 5 family.

It is found in the periplasm. This is Putative binding protein BRA0576/BS1330_II0571 from Brucella suis biovar 1 (strain 1330).